The primary structure comprises 314 residues: MIEFEKPNIHKIDENDNYGKFVVEPLERGYGTTLGNSLRRILLSSLPGAAVTSIQIDGVLHEFSTIEGVTEDVTAIILNVKKIALKLESDETKTLEIDVKGPANVTAGDIIGDADVEVLNPDLPICTVADGAHFHMRMTANTGRGYVSAEDNKHREDDMPIGVLAVDSLYSPIERVNYQVENTRVGQRDDFDKLTLDVWTNGSITPSEAISLSAKILTDHLSIFVNLTDEAKNTDVMVEKEETHKEKMLEMTIEELDLSVRSYNCLKRAGINTVQELTNKTEADMMKVRNLGRKSLEEVKAKLADLGLSLRKED.

The tract at residues 1–228 is alpha N-terminal domain (alpha-NTD); the sequence is MIEFEKPNIH…DHLSIFVNLT (228 aa). An alpha C-terminal domain (alpha-CTD) region spans residues 245 to 314; that stretch reads KEKMLEMTIE…DLGLSLRKED (70 aa).

The protein belongs to the RNA polymerase alpha chain family. In terms of assembly, homodimer. The RNAP catalytic core consists of 2 alpha, 1 beta, 1 beta' and 1 omega subunit. When a sigma factor is associated with the core the holoenzyme is formed, which can initiate transcription.

The catalysed reaction is RNA(n) + a ribonucleoside 5'-triphosphate = RNA(n+1) + diphosphate. In terms of biological role, DNA-dependent RNA polymerase catalyzes the transcription of DNA into RNA using the four ribonucleoside triphosphates as substrates. The chain is DNA-directed RNA polymerase subunit alpha from Lactiplantibacillus plantarum (strain ATCC BAA-793 / NCIMB 8826 / WCFS1) (Lactobacillus plantarum).